We begin with the raw amino-acid sequence, 204 residues long: MSIFEYNGSALVAMVGKNCFAIASDRRLGVQLQTIATDFQRIFKIHDKLYVGLSGLATDVQTLYQRFAFRHKLYQLREERNMRPETFASLVSALLYEKRFGPYFCQPVIAGLGEDDKPFICTMDSIGAKELAKDFVVAGTAAESLYGACESMYKPDMEPEELFETISQALLSSIDRDCLSGWGGHVYVVSPNQVIERTLKGRMD.

It belongs to the peptidase T1B family. In terms of assembly, the 26S proteasome consists of a 20S proteasome core and two 19S regulatory subunits. The 20S proteasome core is composed of 28 subunits that are arranged in four stacked rings, resulting in a barrel-shaped structure. The two end rings are each formed by seven alpha subunits, and the two central rings are each formed by seven beta subunits. The catalytic chamber with the active sites is on the inside of the barrel.

The protein localises to the cytoplasm. It localises to the nucleus. In terms of biological role, non-catalytic component of the proteasome, a multicatalytic proteinase complex which is characterized by its ability to cleave peptides with Arg, Phe, Tyr, Leu, and Glu adjacent to the leaving group at neutral or slightly basic pH. The proteasome has an ATP-dependent proteolytic activity. This is Proteasome subunit beta type-3 (PBC1) from Picea mariana (Black spruce).